The chain runs to 303 residues: UDP-3-O-acyl-N-acetylglucosamine deacetylase (303 aa).

Zn(2+) contacts are provided by histidine 78, histidine 237, and aspartate 241. Catalysis depends on histidine 264, which acts as the Proton donor.

This sequence belongs to the LpxC family. Requires Zn(2+) as cofactor.

The catalysed reaction is a UDP-3-O-[(3R)-3-hydroxyacyl]-N-acetyl-alpha-D-glucosamine + H2O = a UDP-3-O-[(3R)-3-hydroxyacyl]-alpha-D-glucosamine + acetate. It participates in glycolipid biosynthesis; lipid IV(A) biosynthesis; lipid IV(A) from (3R)-3-hydroxytetradecanoyl-[acyl-carrier-protein] and UDP-N-acetyl-alpha-D-glucosamine: step 2/6. Its function is as follows. Catalyzes the hydrolysis of UDP-3-O-myristoyl-N-acetylglucosamine to form UDP-3-O-myristoylglucosamine and acetate, the committed step in lipid A biosynthesis. This chain is UDP-3-O-acyl-N-acetylglucosamine deacetylase, found in Pseudomonas savastanoi pv. phaseolicola (strain 1448A / Race 6) (Pseudomonas syringae pv. phaseolicola (strain 1448A / Race 6)).